The following is a 509-amino-acid chain: Probable cation transporter HKT2;3 (509 aa).

Topologically, residues 1–32 (MPIRLHIFVNSARHAINSSAFICRFIAYHLSP) are cytoplasmic. Transmembrane regions (helical) follow at residues 33–53 (LLIHLSYFLIIDILGFVSLVV) and 96–116 (ILTLLMFLDSKMFLSFLGLVL). Topologically, residues 117–164 (ESSKQNKHDPENRRVSSVTVCKQSQLEEATPQTPSMNSIDIKKRCLKY) are cytoplasmic. 2 helical membrane passes run 165-185 (LVFVVLAYMIIILVTGSLLVF) and 237-257 (GLLLLLIGQILAGSTLFPVFL). The Cytoplasmic segment spans residues 258–296 (RLVIWALRGLRLAKAEEPDFMMNNSSAVGFSHLLPNLQT). A run of 2 helical transmembrane segments spans residues 297 to 317 (IFLAVVEVAFVAMTVILFCCL) and 353 to 373 (CSLVAPAALVLFMVMMYTPSL). At 374–400 (TKLFSACQDHKRIGPESDDRTSKGKPF) the chain is on the cytoplasmic side. 2 helical membrane-spanning segments follow: residues 401-421 (LKMMAFSPLGFNTTVIMLVCI) and 474-494 (AYNFSGWWSEPGKLILVLAML). Residues 495-509 (CGRLNSKDSTSARTR) lie on the Cytoplasmic side of the membrane.

This sequence belongs to the TrkH potassium transport family. HKT (TC 2.A.38.3) subfamily.

Its subcellular location is the membrane. Its function is as follows. Probable cation transporter. May be involved in regulation of potassium-sodium homeostasis. The polypeptide is Probable cation transporter HKT2;3 (Oryza sativa subsp. japonica (Rice)).